The following is a 795-amino-acid chain: Probable alpha,alpha-trehalose-phosphate synthase [UDP-forming] 4 (795 aa).

The tract at residues 4–469 is glycosyltransferase; that stretch reads PRLLVVSMSL…WADDFMKLTL (466 aa).

In the N-terminal section; belongs to the glycosyltransferase 20 family. It in the C-terminal section; belongs to the trehalose phosphatase family.

It carries out the reaction D-glucose 6-phosphate + UDP-alpha-D-glucose = alpha,alpha-trehalose 6-phosphate + UDP + H(+). In Arabidopsis thaliana (Mouse-ear cress), this protein is Probable alpha,alpha-trehalose-phosphate synthase [UDP-forming] 4 (TPS4).